Consider the following 321-residue polypeptide: Putative ankyrin repeat domain-containing protein 26-like protein (321 aa).

ANK repeat units follow at residues 48–78, 82–111, 115–144, 148–177, and 181–210; these read KHLGKLHRAASRGEVSKVECILSSGSADLDE, KKRTALHLACANGHPEVVALLVDRGCQLDV, KNRTALLKAVQCQEEECATILLEHGADPDL, YGNTTLHYAIYNEDIPMTKKLLLHHANIES, and DELTPFLLAVHEQKQQMEDFLRKQKENLTA. Disordered stretches follow at residues 222-242 and 268-321; these read EYKENETPRNPQNSNPEGTSN and FNKP…NENI. Over residues 229 to 242 the composition is skewed to polar residues; that stretch reads PRNPQNSNPEGTSN.

The polypeptide is Putative ankyrin repeat domain-containing protein 26-like protein (ANKRD26P1) (Homo sapiens (Human)).